The primary structure comprises 793 residues: Splicing factor 3A subunit 1 (793 aa).

Residues 1 to 43 (MPAGPVQAVPPPPPVPTEPKQPTEEEASSKEDSAPSKPVVGII) form a disordered region. Pro residues predominate over residues 8–19 (AVPPPPPVPTEP). Residue K20 forms a Glycyl lysine isopeptide (Lys-Gly) (interchain with G-Cter in SUMO2) linkage. Positions 21 to 34 (QPTEEEASSKEDSA) are enriched in basic and acidic residues. The SURP motif 1 repeat unit spans residues 52–94 (IVDKTASFVARNGPEFEARIRQNEINNPKFNFLNPNDPYHAYY). At K55 the chain carries N6-acetyllysine. K131 is covalently cross-linked (Glycyl lysine isopeptide (Lys-Gly) (interchain with G-Cter in SUMO2)). One copy of the SURP motif 2 repeat lies at 166 to 208 (VVKLTAQFVARNGRQFLTQLMQKEQRNYQFDFLRPQHSLFNYF). The disordered stretch occupies residues 318 to 428 (GESEEVEMEV…KIPASKMQEH (111 aa)). Residues S320, S329, and S359 each carry the phosphoserine modification. 2 stretches are compositionally biased toward acidic residues: residues 320 to 334 (SEEVEMEVESDEEDD) and 354 to 364 (DMDEGSDDEEE). Positions 368-384 (VPPPPETPMPPPLPPTP) are enriched in pro residues. Basic and acidic residues predominate over residues 388–397 (IVRKDYDPKA). At S413 the chain carries Phosphoserine. A Glycyl lysine isopeptide (Lys-Gly) (interchain with G-Cter in SUMO2) cross-link involves residue K424. The residue at position 451 (S451) is a Phosphoserine. Phosphotyrosine is present on Y456. Residues 488-502 (IGEEEIQKPEEKVTW) are compositionally biased toward basic and acidic residues. Disordered stretches follow at residues 488-518 (IGEEEIQKPEEKVTWDGHSGSMARTQQAAQA), 530-584 (HKAK…TMPP), and 665-688 (APMPPVHPPPPMEDEPTSKKLKTE). K499 participates in a covalent cross-link: Glycyl lysine isopeptide (Lys-Gly) (interchain with G-Cter in SUMO2). S508 is subject to Phosphoserine. Positions 509–518 (MARTQQAAQA) are enriched in polar residues. K542 participates in a covalent cross-link: Glycyl lysine isopeptide (Lys-Gly) (interchain with G-Cter in SUMO2). The span at 665 to 675 (APMPPVHPPPP) shows a compositional bias: pro residues. The tract at residues 680–702 (PTSKKLKTEDSLMPEEEFLRRNK) is required and sufficient for nuclear import. K686 is covalently cross-linked (Glycyl lysine isopeptide (Lys-Gly) (interchain with G-Cter in SUMO2)). Positions 707–793 (IKVQVPNMQD…ALKERGGRKK (87 aa)) constitute a Ubiquitin-like domain. Position 759 is a phosphotyrosine (Y759).

As to quaternary structure, component of the 17S U2 SnRNP complex, a ribonucleoprotein complex that contains small nuclear RNA (snRNA) U2 and a number of specific proteins. Part of the SF3A subcomplex of the 17S U2 SnRNP complex which is composed of three subunits; SF3A3/SAP61, SF3A2/SAP62 and SF3A1/SAP114. SF3A associates with the splicing factor SF3B and a 12S RNA unit to form the mature 17S U2 small nuclear ribonucleoprotein complex (17S U2 snRNP). SF3A1 functions as a scaffold that interacts directly with both SF3A2 and SF3A3. Identified in the spliceosome 'E' complex, a precursor of the spliceosome 'A' complex. Identified in the spliceosome 'A' and 'B' complexes. Identified in the spliceosome 'C' complex. Interacts with P2RX6; resulting in a reduction of the splicing activity. As to expression, ubiquitously expressed.

The protein localises to the nucleus. It localises to the nucleus speckle. Its function is as follows. Component of the 17S U2 SnRNP complex of the spliceosome, a large ribonucleoprotein complex that removes introns from transcribed pre-mRNAs. The 17S U2 SnRNP complex (1) directly participates in early spliceosome assembly and (2) mediates recognition of the intron branch site during pre-mRNA splicing by promoting the selection of the pre-mRNA branch-site adenosine, the nucleophile for the first step of splicing. Within the 17S U2 SnRNP complex, SF3A1 is part of the SF3A subcomplex that contributes to the assembly of the 17S U2 snRNP, and the subsequent assembly of the pre-spliceosome 'E' complex and the pre-catalytic spliceosome 'A' complex. Involved in pre-mRNA splicing as a component of pre-catalytic spliceosome 'B' complexes. This chain is Splicing factor 3A subunit 1 (SF3A1), found in Homo sapiens (Human).